We begin with the raw amino-acid sequence, 252 residues long: Clc-like protein 2 (252 aa).

The next 4 helical transmembrane spans lie at 7-29 (YAIL…TPAW), 91-111 (LFHI…SFCV), 127-147 (VFLV…AVYS), and 173-193 (IALT…VHVL).

It belongs to the Clc family.

The protein localises to the membrane. In Caenorhabditis elegans, this protein is Clc-like protein 2 (clc-2).